We begin with the raw amino-acid sequence, 242 residues long: MISRIQELVAIVPAAGIGARMGAEIPKQYLMLNHQPILAHTLDRLLEHPRIDKVIIALSPEDSHFAKLSQASHPKLMTVIGGKERADSVLSALKVASQSAWALVHDAARPCLSAADIDKLIAACETEEGHQQGAILAMPVRDTMKRSGKGGAIQETVCRENLWHALTPQLFPVISLKQNLADALAAQVAITDEASAMEWAGGQPLLVSGRFDNIKVTHPEDLQLAALYLQAAASDPNSSTGE.

This sequence belongs to the IspD/TarI cytidylyltransferase family. IspD subfamily.

The enzyme catalyses 2-C-methyl-D-erythritol 4-phosphate + CTP + H(+) = 4-CDP-2-C-methyl-D-erythritol + diphosphate. It participates in isoprenoid biosynthesis; isopentenyl diphosphate biosynthesis via DXP pathway; isopentenyl diphosphate from 1-deoxy-D-xylulose 5-phosphate: step 2/6. In terms of biological role, catalyzes the formation of 4-diphosphocytidyl-2-C-methyl-D-erythritol from CTP and 2-C-methyl-D-erythritol 4-phosphate (MEP). The protein is 2-C-methyl-D-erythritol 4-phosphate cytidylyltransferase of Shewanella loihica (strain ATCC BAA-1088 / PV-4).